Reading from the N-terminus, the 810-residue chain is Glycerol-3-phosphate acyltransferase (810 aa).

The short motif at cysteine 305–isoleucine 310 is the HXXXXD motif element.

Belongs to the GPAT/DAPAT family.

The protein resides in the cell inner membrane. It catalyses the reaction sn-glycerol 3-phosphate + an acyl-CoA = a 1-acyl-sn-glycero-3-phosphate + CoA. It participates in phospholipid metabolism; CDP-diacylglycerol biosynthesis; CDP-diacylglycerol from sn-glycerol 3-phosphate: step 1/3. This chain is Glycerol-3-phosphate acyltransferase, found in Haemophilus influenzae (strain 86-028NP).